A 302-amino-acid chain; its full sequence is uncharacterized protein (302 aa).

One can recognise an HTH lysR-type domain in the interval 1 to 60; that stretch reads MRMNMSDFATFFAVARNQSFRAAGDELGLSSSAISHSIKTLEQRLKIRLFNRTTRSVSLT. Residues 20 to 40 constitute a DNA-binding region (H-T-H motif); the sequence is FRAAGDELGLSSSAISHSIKT.

Belongs to the LysR transcriptional regulatory family.

This is an uncharacterized protein from Escherichia coli (strain K12).